The sequence spans 192 residues: Ion-translocating oxidoreductase complex subunit B (192 aa).

Positions 1–26 (MNAIWIAVAAVSLLGLAFGAILGYAS) are hydrophobic. The 4Fe-4S domain maps to 32–91 (EDDPVVEKIDEILPQSQCGQCGYPGCRPYAEAISCNGEKINRCAPGGEAVMLKIAELLNV). 12 residues coordinate [4Fe-4S] cluster: C49, C52, C57, C74, C117, C120, C123, C127, C147, C150, C153, and C157. 2 consecutive 4Fe-4S ferredoxin-type domains span residues 108–137 (MVAFIDENNCIGCTKCIQACPVDAIVGATR) and 138–167 (AMHTVMSDLCTGCNLCVDPCPTHCISLQPV).

The protein belongs to the 4Fe4S bacterial-type ferredoxin family. RnfB subfamily. The complex is composed of six subunits: RsxA, RsxB, RsxC, RsxD, RsxE and RsxG. [4Fe-4S] cluster is required as a cofactor.

Its subcellular location is the cell inner membrane. In terms of biological role, part of a membrane-bound complex that couples electron transfer with translocation of ions across the membrane. Required to maintain the reduced state of SoxR. The chain is Ion-translocating oxidoreductase complex subunit B from Escherichia coli O17:K52:H18 (strain UMN026 / ExPEC).